Consider the following 319-residue polypeptide: Aspartate carbamoyltransferase catalytic subunit (319 aa).

Residues Arg65 and Thr66 each contribute to the carbamoyl phosphate site. An L-aspartate-binding site is contributed by Lys93. Residues Arg115, His149, and Gln152 each coordinate carbamoyl phosphate. Arg182 and Arg237 together coordinate L-aspartate. Gly278 and Pro279 together coordinate carbamoyl phosphate.

It belongs to the aspartate/ornithine carbamoyltransferase superfamily. ATCase family. In terms of assembly, heterododecamer (2C3:3R2) of six catalytic PyrB chains organized as two trimers (C3), and six regulatory PyrI chains organized as three dimers (R2).

The catalysed reaction is carbamoyl phosphate + L-aspartate = N-carbamoyl-L-aspartate + phosphate + H(+). It participates in pyrimidine metabolism; UMP biosynthesis via de novo pathway; (S)-dihydroorotate from bicarbonate: step 2/3. In terms of biological role, catalyzes the condensation of carbamoyl phosphate and aspartate to form carbamoyl aspartate and inorganic phosphate, the committed step in the de novo pyrimidine nucleotide biosynthesis pathway. This is Aspartate carbamoyltransferase catalytic subunit from Janthinobacterium sp. (strain Marseille) (Minibacterium massiliensis).